Consider the following 341-residue polypeptide: Heat-inducible transcription repressor HrcA (341 aa).

Belongs to the HrcA family.

Negative regulator of class I heat shock genes (grpE-dnaK-dnaJ and groELS operons). Prevents heat-shock induction of these operons. This chain is Heat-inducible transcription repressor HrcA, found in Corynebacterium jeikeium (strain K411).